Reading from the N-terminus, the 213-residue chain is Kynurenine formamidase (213 aa).

Tryptophan 18 is a substrate binding site. The Zn(2+) site is built by histidine 48, histidine 52, and aspartate 54. Histidine 58 serves as the catalytic Proton donor/acceptor. Zn(2+) contacts are provided by histidine 160 and glutamate 172.

Belongs to the Cyclase 1 superfamily. KynB family. In terms of assembly, homodimer. Zn(2+) serves as cofactor.

It catalyses the reaction N-formyl-L-kynurenine + H2O = L-kynurenine + formate + H(+). Its pathway is amino-acid degradation; L-tryptophan degradation via kynurenine pathway; L-kynurenine from L-tryptophan: step 2/2. Functionally, catalyzes the hydrolysis of N-formyl-L-kynurenine to L-kynurenine, the second step in the kynurenine pathway of tryptophan degradation. This chain is Kynurenine formamidase, found in Burkholderia mallei (strain NCTC 10247).